We begin with the raw amino-acid sequence, 299 residues long: tRNA(Met) cytidine acetate ligase (299 aa).

Residues 6–19, glycine 100, asparagine 157, and arginine 182 contribute to the ATP site; that span reads IAEY…HIYM.

It belongs to the TmcAL family.

The protein resides in the cytoplasm. It catalyses the reaction cytidine(34) in elongator tRNA(Met) + acetate + ATP = N(4)-acetylcytidine(34) in elongator tRNA(Met) + AMP + diphosphate. Functionally, catalyzes the formation of N(4)-acetylcytidine (ac(4)C) at the wobble position of elongator tRNA(Met), using acetate and ATP as substrates. First activates an acetate ion to form acetyladenylate (Ac-AMP) and then transfers the acetyl group to tRNA to form ac(4)C34. This is tRNA(Met) cytidine acetate ligase from Mycoplasma mobile (strain ATCC 43663 / 163K / NCTC 11711) (Mesomycoplasma mobile).